The chain runs to 175 residues: Myosin regulatory light chain 2, atrial isoform (175 aa).

A2 bears the N-acetylalanine mark. A phosphoserine mark is found at S22 and S23. EF-hand domains lie at 32 to 67, 102 to 137, and 138 to 173; these read AQIQEFKEAFSCIDQNRDGIICKSDLRETYSQLGKV, DPEEAILSAFRLFDPSGKGVVNKDQFKQLLLTQADK, and FSPAEVEQMFALTPMDLAGNIDYKSLCYIITHGDEK. The Ca(2+) site is built by D45, N47, D49, and D56.

Myosin is a hexamer of 2 heavy chains and 4 light chains.

The polypeptide is Myosin regulatory light chain 2, atrial isoform (MYL7) (Sus scrofa (Pig)).